A 304-amino-acid chain; its full sequence is Protease HtpX homolog (304 aa).

2 helical membrane passes run 14–34 and 39–59; these read IFII…IGII and YLNG…IMVM. Histidine 144 is a Zn(2+) binding site. Residue glutamate 145 is part of the active site. A Zn(2+)-binding site is contributed by histidine 148. 2 helical membrane passes run 159–179 and 202–222; these read IAIA…RMIF and AIIY…ATAI. Glutamate 231 provides a ligand contact to Zn(2+).

Belongs to the peptidase M48B family. It depends on Zn(2+) as a cofactor.

The protein localises to the cell membrane. In Listeria monocytogenes serotype 4b (strain CLIP80459), this protein is Protease HtpX homolog.